A 527-amino-acid chain; its full sequence is Mitogen-activated protein kinase kinae MKK2 (527 aa).

2 disordered regions span residues 1–143 (MHDQ…SAGS) and 156–189 (IGST…DKDG). A compositionally biased stretch (low complexity) spans 107–129 (QQGQSASGGSESSAAHSRSGSFG). Over residues 134-143 (RTSNPTSAGS) the composition is skewed to polar residues. Basic and acidic residues predominate over residues 177-189 (ERSDGGAGMDKDG). Residues 227–497 (IVELGGLGEG…PWRMLEHPWM (271 aa)) enclose the Protein kinase domain. ATP is bound by residues 233-241 (LGEGAGGAV) and Lys256.

Belongs to the protein kinase superfamily. STE Ser/Thr protein kinase family. MAP kinase kinase subfamily. Interacts with the adapter protein MST50.

The enzyme catalyses L-seryl-[protein] + ATP = O-phospho-L-seryl-[protein] + ADP + H(+). It catalyses the reaction L-threonyl-[protein] + ATP = O-phospho-L-threonyl-[protein] + ADP + H(+). Functionally, mitogen-activated protein kinase kinase; part of the MCK1-MKK2-MPS1 MAP kinase (MAPK) signal transduction cascade that is essential for appressorium formation, penetration and invasive growth. Beside its role in pathogenesis, the MPS1 cascade is active in conidiation and cellular stress responses. Targets downstream of the the MPS1-MAPK pathway include transcription factors MIG1 and SWI6, as well as GSK1 and MPG1. This Pyricularia oryzae (strain 70-15 / ATCC MYA-4617 / FGSC 8958) (Rice blast fungus) protein is Mitogen-activated protein kinase kinae MKK2.